Here is a 567-residue protein sequence, read N- to C-terminus: MPSRGCSCWLLSLALLCSLAAAKEQYHEFVIRETTVKRLCKSHNIMTVNGQFPGPTLEINEGDSLIINLINRGRYNMTLHWHGVRQMRTGWSDGPEYVTQCPVRPGQSYRYRFTVAAQEGTLWWHAHSSWLRATVYGALLIRPRDGTSYPFDVQPTRELAPILLGEWWDMNPVDVVRAATRTGAAPNISDALTVNAQPGDLYSCSSHDTAVFPVTSGETNLLRFINAALNTELFVSLAGHNMTVVAADASYTKPYTTSLLLLAPGQTTDVLVTFDQPPGRYYLAARAYASAQGVPFDNTTTTAIFDYGAANNASSAAIAMPTLPAYNDTTAATAFTTNLRGLRKAELPSRVDESLFFTVGVGLFNCTNATAQQCGGPNGTRFAASINNVSFVLPSSTSILQAHHHGAPGGVFTADFPANPPVQFDYTAQNVSRALWQPVAGTKVYKLKYGSAVQVVLQGTNIFAGENHPIHLHGYDFYILAEGLGNFDAGADTGKFNVEDPPMRNTVGVPVNGWAVIRFVADNPGVWLMHCHLDVHITWGLAMAFLVDDGVGELQSLEAPPPDLPLC.

The signal sequence occupies residues 1-22; it reads MPSRGCSCWLLSLALLCSLAAA. Plastocyanin-like domains lie at 30–146 and 158–310; these read VIRE…PRDG and ELAP…YGAA. N-linked (GlcNAc...) asparagine glycosylation is present at asparagine 76. Cu cation is bound by residues histidine 80, histidine 82, histidine 125, and histidine 127. Residues asparagine 187, asparagine 241, asparagine 298, asparagine 312, asparagine 327, asparagine 365, asparagine 368, asparagine 378, asparagine 388, and asparagine 430 are each glycosylated (N-linked (GlcNAc...) asparagine). The region spanning 415-551 is the Plastocyanin-like 3 domain; sequence DFPANPPVQF…AMAFLVDDGV (137 aa). Residues histidine 468, histidine 471, histidine 473, histidine 530, cysteine 531, histidine 532, and histidine 536 each coordinate Cu cation.

This sequence belongs to the multicopper oxidase family. Cu cation is required as a cofactor.

The protein localises to the secreted. It localises to the extracellular space. The protein resides in the apoplast. It catalyses the reaction 4 hydroquinone + O2 = 4 benzosemiquinone + 2 H2O. In terms of biological role, lignin degradation and detoxification of lignin-derived products. The polypeptide is Putative laccase-17 (LAC17) (Oryza sativa subsp. japonica (Rice)).